Consider the following 273-residue polypeptide: Large ribosomal subunit protein uL2 (273 aa).

Residues 221–273 (RGTAMNPVDHPHGGGEGRNFGKHPVTPWGVQTKGKKTRHNKRTDKFIVRRRGK) form a disordered region. The segment covering 253 to 273 (KGKKTRHNKRTDKFIVRRRGK) has biased composition (basic residues).

This sequence belongs to the universal ribosomal protein uL2 family. As to quaternary structure, part of the 50S ribosomal subunit. Forms a bridge to the 30S subunit in the 70S ribosome.

Its function is as follows. One of the primary rRNA binding proteins. Required for association of the 30S and 50S subunits to form the 70S ribosome, for tRNA binding and peptide bond formation. It has been suggested to have peptidyltransferase activity; this is somewhat controversial. Makes several contacts with the 16S rRNA in the 70S ribosome. This chain is Large ribosomal subunit protein uL2, found in Glaesserella parasuis serovar 5 (strain SH0165) (Haemophilus parasuis).